Here is a 582-residue protein sequence, read N- to C-terminus: SUMO-activating enzyme subunit uba-2 (582 aa).

Residues glycine 20–glycine 25, aspartate 44, asparagine 52–arginine 55, lysine 68, serine 91–isoleucine 92, and aspartate 113–arginine 118 each bind ATP. Residues cysteine 154 and cysteine 157 each coordinate Zn(2+). The active-site Glycyl thioester intermediate is the cysteine 170. Residues serine 204–asparagine 214 are compositionally biased toward acidic residues. A disordered region spans residues serine 204–glycine 235. The segment covering threonine 219–proline 231 has biased composition (basic and acidic residues). Residues cysteine 431 and cysteine 434 each coordinate Zn(2+). The segment covering phenylalanine 531 to glycine 570 has biased composition (basic and acidic residues). A disordered region spans residues phenylalanine 531 to alanine 582.

This sequence belongs to the ubiquitin-activating E1 family. In terms of assembly, heterodimer with aos-1.

It functions in the pathway protein modification; protein sumoylation. The dimeric enzyme acts as an E1 ligase for smo-1. It mediates ATP-dependent activation of smo-1 and formation of a thioester with a conserved cysteine residue on uba-2. This Caenorhabditis elegans protein is SUMO-activating enzyme subunit uba-2 (uba-2).